The chain runs to 317 residues: Melanocyte-stimulating hormone receptor (317 aa).

At 1–37 (MPVQGSQRRLLGSLNSTPTATPHLGLAANQTGARCLE) the chain is on the extracellular side. The N-linked (GlcNAc...) asparagine glycan is linked to Asn-29. Residues 38–63 (VSVPDGLFLSLGLVSLVENVLVVTAI) traverse the membrane as a helical segment. Topologically, residues 64–72 (AKNRNLHSP) are cytoplasmic. The chain crosses the membrane as a helical span at residues 73–93 (MYCFICCLALSDLLVSGSNML). The Extracellular segment spans residues 94–118 (ETAVTLLLEAGALAARAAVVQQLDN). The chain crosses the membrane as a helical span at residues 119 to 140 (VIDVITCSSMLSSLCFLGAIAV). At 141-163 (DRYISIFYALRYHSIVTLPRARR) the chain is on the cytoplasmic side. Residues 164–183 (AVAAIWVASVLCSTLFIAYY) form a helical membrane-spanning segment. The Extracellular segment spans residues 184-191 (DHAAVLLC). Residues 192 to 211 (LVVFFLAMLVLMAVLYVHML) form a helical membrane-spanning segment. Over 212–240 (ARACQHAQGIARLHKRQRLAHQGFGLKGA) the chain is Cytoplasmic. A helical transmembrane segment spans residues 241 to 266 (ATLTILLGIFFLCWGPFFLHLTLIVL). Residues 267–279 (CPQHPTCSCIFKN) lie on the Extracellular side of the membrane. The chain crosses the membrane as a helical span at residues 280–300 (FNLFLALIICNAIIDPLIYAF). Over 301–317 (RSQELRRTLKEVLLCSW) the chain is Cytoplasmic. Cys-315 carries the S-palmitoyl cysteine lipid modification.

The protein belongs to the G-protein coupled receptor 1 family. In terms of assembly, interacts with MGRN1, but does not undergo MGRN1-mediated ubiquitination; this interaction competes with GNAS-binding and thus inhibits agonist-induced cAMP production. Interacts with OPN3; the interaction results in a decrease in MC1R-mediated cAMP signaling and ultimately a decrease in melanin production in melanocytes.

The protein resides in the cell membrane. In terms of biological role, receptor for MSH (alpha, beta and gamma) and ACTH. The activity of this receptor is mediated by G proteins which activate adenylate cyclase. Mediates melanogenesis, the production of eumelanin (black/brown) and phaeomelanin (red/yellow), via regulation of cAMP signaling in melanocytes. This Macaca sylvanus (Barbary macaque) protein is Melanocyte-stimulating hormone receptor (MC1R).